Consider the following 387-residue polypeptide: Succinyl-diaminopimelate desuccinylase (387 aa).

H74 provides a ligand contact to Zn(2+). The active site involves D76. D107 contacts Zn(2+). E142 acts as the Proton acceptor in catalysis. E143, E171, and H360 together coordinate Zn(2+).

The protein belongs to the peptidase M20A family. DapE subfamily. In terms of assembly, homodimer. Requires Zn(2+) as cofactor. The cofactor is Co(2+).

It catalyses the reaction N-succinyl-(2S,6S)-2,6-diaminopimelate + H2O = (2S,6S)-2,6-diaminopimelate + succinate. It participates in amino-acid biosynthesis; L-lysine biosynthesis via DAP pathway; LL-2,6-diaminopimelate from (S)-tetrahydrodipicolinate (succinylase route): step 3/3. In terms of biological role, catalyzes the hydrolysis of N-succinyl-L,L-diaminopimelic acid (SDAP), forming succinate and LL-2,6-diaminopimelate (DAP), an intermediate involved in the bacterial biosynthesis of lysine and meso-diaminopimelic acid, an essential component of bacterial cell walls. This chain is Succinyl-diaminopimelate desuccinylase, found in Rhodopseudomonas palustris (strain BisA53).